The sequence spans 149 residues: MANQLTEEQIAEFKEAFSLFDKDGDGCITTQELGTVMRSLGQNPTEAELQDMVNEIDKDGNGTVDFPEFLTMMSRKMKDTDSEEEIREAFRVFDKDGNGFVSAAELRHVMTRLGEKLSDEEVDEMIQAADTDGDGQVNYEEFVHMLVSK.

4 EF-hand domains span residues 8-43 (EQIA…LGQN), 44-79 (PTEA…KMKD), 81-116 (DSEE…LGEK), and 117-149 (LSDE…LVSK). The Ca(2+) site is built by aspartate 21, aspartate 23, aspartate 25, cysteine 27, glutamate 32, aspartate 57, aspartate 59, asparagine 61, threonine 63, glutamate 68, aspartate 94, aspartate 96, asparagine 98, glutamate 105, aspartate 130, aspartate 132, aspartate 134, glutamine 136, and glutamate 141.

It belongs to the calmodulin family. As to quaternary structure, interacts with MYO10, the interaction is calcium-dependent and essential for MYO10 function in filopodial extension.

May function as a specific light chain of unconventional myosin-10 (MYO10), also enhances MYO10 translation, possibly by acting as a chaperone for the emerging MYO10 heavy chain protein. May compete with calmodulin by binding, with different affinities, to cellular substrates. This chain is Calmodulin-like protein 3 (Calml3), found in Rattus norvegicus (Rat).